A 502-amino-acid polypeptide reads, in one-letter code: Probable malate:quinone oxidoreductase 1 (502 aa).

Belongs to the MQO family. It depends on FAD as a cofactor.

It carries out the reaction (S)-malate + a quinone = a quinol + oxaloacetate. It participates in carbohydrate metabolism; tricarboxylic acid cycle; oxaloacetate from (S)-malate (quinone route): step 1/1. The polypeptide is Probable malate:quinone oxidoreductase 1 (Pseudomonas putida (strain ATCC 47054 / DSM 6125 / CFBP 8728 / NCIMB 11950 / KT2440)).